Consider the following 675-residue polypeptide: Heat shock 70 kDa protein 12A (675 aa).

Residues 1–13 show a composition bias toward basic and acidic residues; that stretch reads MADKEAGGSDGPR. Positions 1–45 are disordered; it reads MADKEAGGSDGPRETAPTSAYSSPARSLGDTGITPLSPSHIVNDT. An N-acetylalanine modification is found at alanine 2. Polar residues-rich tracts occupy residues 16–25 and 34–45; these read APTSAYSSPA and TPLSPSHIVNDT.

Belongs to the heat shock protein 70 family. Interacts with SORL1 (via cytosolic C-terminus); this interaction affects SORL1 internalization and subcellular localization. In terms of tissue distribution, widely expressed with highest levels in brain, kidney and muscle.

The protein resides in the cytoplasm. It localises to the nucleus. In terms of biological role, adapter protein for SORL1, but not SORT1. Delays SORL1 internalization and affects SORL1 subcellular localization. The protein is Heat shock 70 kDa protein 12A (HSPA12A) of Homo sapiens (Human).